Consider the following 313-residue polypeptide: Dimethyladenosine transferase (313 aa).

Positions 1–22 (MPKIKSAASGRRRERQQQRGQL) are disordered. S-adenosyl-L-methionine-binding residues include H37, L39, G64, E85, D113, and N128.

The protein belongs to the class I-like SAM-binding methyltransferase superfamily. rRNA adenine N(6)-methyltransferase family. As to quaternary structure, part of the small subunit (SSU) processome, composed of more than 70 proteins and the RNA chaperone small nucleolar RNA (snoRNA) U3.

Its subcellular location is the nucleus. The protein localises to the nucleoplasm. The protein resides in the nucleolus. The enzyme catalyses adenosine(1779)/adenosine(1780) in 18S rRNA + 4 S-adenosyl-L-methionine = N(6)-dimethyladenosine(1779)/N(6)-dimethyladenosine(1780) in 18S rRNA + 4 S-adenosyl-L-homocysteine + 4 H(+). In terms of biological role, specifically dimethylates two adjacent adenosines in the loop of a conserved hairpin near the 3'-end of 18S rRNA in the 40S particle. Involved in the pre-rRNA processing steps leading to small-subunit rRNA production independently of its RNA-modifying catalytic activity. Part of the small subunit (SSU) processome, first precursor of the small eukaryotic ribosomal subunit. During the assembly of the SSU processome in the nucleolus, many ribosome biogenesis factors, an RNA chaperone and ribosomal proteins associate with the nascent pre-rRNA and work in concert to generate RNA folding, modifications, rearrangements and cleavage as well as targeted degradation of pre-ribosomal RNA by the RNA exosome. The sequence is that of Dimethyladenosine transferase (DIMT1) from Bos taurus (Bovine).